We begin with the raw amino-acid sequence, 72 residues long: Translation initiation factor IF-1 (72 aa).

An S1-like domain is found at 1 to 72 (MSKEEAIEVE…TRGRITYRAK (72 aa)).

Belongs to the IF-1 family. In terms of assembly, component of the 30S ribosomal translation pre-initiation complex which assembles on the 30S ribosome in the order IF-2 and IF-3, IF-1 and N-formylmethionyl-tRNA(fMet); mRNA recruitment can occur at any time during PIC assembly.

It is found in the cytoplasm. Its function is as follows. One of the essential components for the initiation of protein synthesis. Stabilizes the binding of IF-2 and IF-3 on the 30S subunit to which N-formylmethionyl-tRNA(fMet) subsequently binds. Helps modulate mRNA selection, yielding the 30S pre-initiation complex (PIC). Upon addition of the 50S ribosomal subunit IF-1, IF-2 and IF-3 are released leaving the mature 70S translation initiation complex. This chain is Translation initiation factor IF-1, found in Geotalea uraniireducens (strain Rf4) (Geobacter uraniireducens).